The chain runs to 308 residues: Growth/differentiation factor 15 (308 aa).

The signal sequence occupies residues 1 to 29 (MPGQELKTLNGSQMLLVLLVLLWPPHGGA). Positions 30 to 192 (VSLAEASRAS…HLRPRASRGR (163 aa)) are excised as a propeptide. Asparagine 70 is a glycosylation site (N-linked (GlcNAc...) asparagine). Positions 152–179 (APALHLRLSPPPSQSDQLLVKSSSSRPQ) are disordered. The segment covering 165–178 (QSDQLLVKSSSSRP) has biased composition (polar residues). 4 disulfide bridges follow: cysteine 203–cysteine 210, cysteine 211–cysteine 274, cysteine 240–cysteine 305, and cysteine 244–cysteine 307.

This sequence belongs to the TGF-beta family. In terms of assembly, homodimer; disulfide-linked. Interacts with GFRAL and RET; ligand of GFRAL, which mediates GDF15 internalization and cellular signaling through interaction with RET via the formation of a 2:2:2 ternary complex composed of GDF15, GFRAL and RET. As to expression, detected in plasma (at protein level).

Its subcellular location is the secreted. Its function is as follows. Hormone produced in response to various stresses to confer information about those stresses to the brain, and trigger an aversive response, characterized by nausea and/or loss of appetite. The aversive response is both required to reduce continuing exposure to those stresses at the time of exposure and to promote avoidance behavior in the future. Acts by binding to its receptor, GFRAL, activating GFRAL-expressing neurons localized in the area postrema and nucleus tractus solitarius of the brainstem. It then triggers the activation of neurons localized within the parabrachial nucleus and central amygdala, which constitutes part of the 'emergency circuit' that shapes responses to stressful conditions. The GDF15-GFRAL signal induces expression of genes involved in metabolism, such as lipid metabolism in adipose tissues. Required for avoidance behavior in response to food allergens: induced downstream of mast cell activation to promote aversion and minimize harmful effects of exposure to noxious substances. In addition to suppress appetite, also promotes weight loss by enhancing energy expenditure in muscle: acts by increasing calcium futile cycling in muscle. Contributes to the effect of metformin, an anti-diabetic drug, on appetite reduction and weight loss: produced in the kidney in response to metformin treatment, thereby activating the GDF15-GFRAL response, leading to reduced appetite and weight. Produced in response to anticancer drugs, such as camptothecin or cisplatin, promoting nausea and contributing to malnutrition. Overproduced in many cancers, promoting anorexia in cancer (cachexia). Responsible for the risk of nausea during pregnancy: high levels of GDF15 during pregnancy, mostly originating from embryos, are associated with increased nausea. Maternal sensitivity to nausea is probably determined by pre-pregnancy exposure to GDF15, females with naturally high level of GDF15 being less susceptible to nausea than females with low levels of GDF15 before pregnancy. Promotes metabolic adaptation in response to systemic inflammation caused by bacterial and viral infections in order to promote tissue tolerance and prevent tissue damage. Inhibits growth hormone signaling on hepatocytes. This is Growth/differentiation factor 15 from Macaca fascicularis (Crab-eating macaque).